A 750-amino-acid chain; its full sequence is Phosphoribosylformylglycinamidine synthase subunit PurL (750 aa).

Residue H54 is part of the active site. ATP contacts are provided by Y57 and K101. Residue E103 participates in Mg(2+) binding. Residues 104–107 (SHNH) and R126 each bind substrate. The active-site Proton acceptor is H105. Residue D127 participates in Mg(2+) binding. Q251 lines the substrate pocket. D279 is a binding site for Mg(2+). Residue 323-325 (ESQ) coordinates substrate. ATP-binding residues include D509 and G546. N547 contributes to the Mg(2+) binding site. S549 serves as a coordination point for substrate.

Belongs to the FGAMS family. As to quaternary structure, monomer. Part of the FGAM synthase complex composed of 1 PurL, 1 PurQ and 2 PurS subunits.

Its subcellular location is the cytoplasm. The catalysed reaction is N(2)-formyl-N(1)-(5-phospho-beta-D-ribosyl)glycinamide + L-glutamine + ATP + H2O = 2-formamido-N(1)-(5-O-phospho-beta-D-ribosyl)acetamidine + L-glutamate + ADP + phosphate + H(+). Its pathway is purine metabolism; IMP biosynthesis via de novo pathway; 5-amino-1-(5-phospho-D-ribosyl)imidazole from N(2)-formyl-N(1)-(5-phospho-D-ribosyl)glycinamide: step 1/2. In terms of biological role, part of the phosphoribosylformylglycinamidine synthase complex involved in the purines biosynthetic pathway. Catalyzes the ATP-dependent conversion of formylglycinamide ribonucleotide (FGAR) and glutamine to yield formylglycinamidine ribonucleotide (FGAM) and glutamate. The FGAM synthase complex is composed of three subunits. PurQ produces an ammonia molecule by converting glutamine to glutamate. PurL transfers the ammonia molecule to FGAR to form FGAM in an ATP-dependent manner. PurS interacts with PurQ and PurL and is thought to assist in the transfer of the ammonia molecule from PurQ to PurL. The chain is Phosphoribosylformylglycinamidine synthase subunit PurL from Cutibacterium acnes (strain DSM 16379 / KPA171202) (Propionibacterium acnes).